The sequence spans 78 residues: Large ribosomal subunit protein bL28 (78 aa).

The interval 1 to 20 (MSRVCQVTGKGPVTGNNISH) is disordered.

It belongs to the bacterial ribosomal protein bL28 family.

The protein is Large ribosomal subunit protein bL28 of Stutzerimonas stutzeri (strain A1501) (Pseudomonas stutzeri).